The following is a 1108-amino-acid chain: Receptor-type guanylate cyclase gcy-20 (1108 aa).

Positions 1–15 (MRILLLLLQNILVFC) are cleaved as a signal peptide. Topologically, residues 16–474 (QFLQTIKVGL…ECPADFVKEY (459 aa)) are extracellular. Residues N66, N131, N319, N341, N366, and N380 are each glycosylated (N-linked (GlcNAc...) asparagine). A helical transmembrane segment spans residues 475–495 (LVYTIIAAFIVILALLAGCAG). The Protein kinase domain maps to 483–803 (FIVILALLAG…IEQVRSHLNG (321 aa)). Residues 489–497 (LLAGCAGLL) and K571 contribute to the ATP site. Over 496–1108 (LLYTMHMKRK…QAGDNNSETV (613 aa)) the chain is Cytoplasmic. In terms of domain architecture, Guanylate cyclase spans 876–1006 (TIFFSDVVQF…DAVNTASRME (131 aa)). The interval 1083–1108 (LEKNAEGSETSSLSVDQAGDNNSETV) is disordered. Positions 1089–1108 (GSETSSLSVDQAGDNNSETV) are enriched in polar residues.

It belongs to the adenylyl cyclase class-4/guanylyl cyclase family. In terms of tissue distribution, expressed asymmetrically in ASE left (ASEL) sensory neuron. Expressed in excretory gland and canal cell.

The protein localises to the cell membrane. It catalyses the reaction GTP = 3',5'-cyclic GMP + diphosphate. Its function is as follows. Guanylate cyclase involved in the production of the second messenger cGMP. This Caenorhabditis elegans protein is Receptor-type guanylate cyclase gcy-20.